The primary structure comprises 317 residues: Glutathione synthetase (317 aa).

The 187-residue stretch at 124-310 (EKLFTAWFPE…ITGKLMDAIE (187 aa)) folds into the ATP-grasp domain. Residue 150–207 (FRQEHGDIILKPLDGMGGASIFRVKENDPNVSVIIETLTNHGQNYAMAQTFVPDISNG) participates in ATP binding. Mg(2+) is bound by residues E281 and N283.

This sequence belongs to the prokaryotic GSH synthase family. Requires Mg(2+) as cofactor. It depends on Mn(2+) as a cofactor.

It catalyses the reaction gamma-L-glutamyl-L-cysteine + glycine + ATP = glutathione + ADP + phosphate + H(+). The protein operates within sulfur metabolism; glutathione biosynthesis; glutathione from L-cysteine and L-glutamate: step 2/2. In Vibrio vulnificus (strain CMCP6), this protein is Glutathione synthetase.